The following is a 575-amino-acid chain: Acetolactate synthase large subunit (575 aa).

Position 57 (E57) interacts with thiamine diphosphate. FAD-binding positions include R159, 265–286, and 308–327; these read HGSYAANMALVEADYIINLGSR and DIDAAELGKIVKTDIPILSD. The interval 395 to 475 is thiamine pyrophosphate binding; sequence QHQMWVAQYY…IKVVLINNHS (81 aa). Mg(2+) is bound by residues D446 and N473.

It belongs to the TPP enzyme family. Dimer of large and small chains. Mg(2+) is required as a cofactor. Thiamine diphosphate serves as cofactor.

The catalysed reaction is 2 pyruvate + H(+) = (2S)-2-acetolactate + CO2. It participates in amino-acid biosynthesis; L-isoleucine biosynthesis; L-isoleucine from 2-oxobutanoate: step 1/4. It functions in the pathway amino-acid biosynthesis; L-valine biosynthesis; L-valine from pyruvate: step 1/4. The protein is Acetolactate synthase large subunit (ilvB) of Lactococcus lactis subsp. lactis (strain IL1403) (Streptococcus lactis).